Here is a 103-residue protein sequence, read N- to C-terminus: Large ribosomal subunit protein bL21 (103 aa).

This sequence belongs to the bacterial ribosomal protein bL21 family. In terms of assembly, part of the 50S ribosomal subunit. Contacts protein L20.

Its function is as follows. This protein binds to 23S rRNA in the presence of protein L20. The sequence is that of Large ribosomal subunit protein bL21 from Pseudomonas syringae pv. syringae (strain B728a).